A 264-amino-acid polypeptide reads, in one-letter code: Thymidylate synthase (264 aa).

Arg21 is a dUMP binding site. A (6R)-5,10-methylene-5,6,7,8-tetrahydrofolate-binding site is contributed by His51. A dUMP-binding site is contributed by 126 to 127 (RR). Cys146 (nucleophile) is an active-site residue. DUMP-binding positions include 166–169 (RSAD), Asn177, and 207–209 (HIY). Residue Asp169 coordinates (6R)-5,10-methylene-5,6,7,8-tetrahydrofolate. Ser263 contacts (6R)-5,10-methylene-5,6,7,8-tetrahydrofolate.

Belongs to the thymidylate synthase family. Bacterial-type ThyA subfamily. As to quaternary structure, homodimer.

Its subcellular location is the cytoplasm. It catalyses the reaction dUMP + (6R)-5,10-methylene-5,6,7,8-tetrahydrofolate = 7,8-dihydrofolate + dTMP. It functions in the pathway pyrimidine metabolism; dTTP biosynthesis. In terms of biological role, catalyzes the reductive methylation of 2'-deoxyuridine-5'-monophosphate (dUMP) to 2'-deoxythymidine-5'-monophosphate (dTMP) while utilizing 5,10-methylenetetrahydrofolate (mTHF) as the methyl donor and reductant in the reaction, yielding dihydrofolate (DHF) as a by-product. This enzymatic reaction provides an intracellular de novo source of dTMP, an essential precursor for DNA biosynthesis. This is Thymidylate synthase from Halalkalibacterium halodurans (strain ATCC BAA-125 / DSM 18197 / FERM 7344 / JCM 9153 / C-125) (Bacillus halodurans).